The following is a 241-amino-acid chain: NEP1-interacting protein 2 (241 aa).

The segment at 1 to 20 is disordered; it reads MASSSSSSYRFQSGSYPLSS. The Lumenal, thylakoid segment spans residues 1 to 36; that stretch reads MASSSSSSYRFQSGSYPLSSSPSLGNFVERIKDACH. A helical transmembrane segment spans residues 37-57; the sequence is FLVSAVLGTIISAILTFFFAL. Residues 58–76 are Stromal-facing; the sequence is VGTLLGALTGALIGQETES. The helical transmembrane segment at 77-97 threads the bilayer; sequence GFIRGAAIGAISGAVFSIEVF. The Lumenal, thylakoid portion of the chain corresponds to 98–109; it reads ESSLDLWKSDES. A helical transmembrane segment spans residues 110-130; sequence GFGCFLYLIDVIVSLLSGRLV. Over 131-241 the chain is Stromal; it reads RERIGPAMLS…GSCPMCRRDI (111 aa). Residues 196 to 238 form an RING-type; atypical zinc finger; that stretch reads CSVCLQDFQLGETVRSLPHCHHMFHLPCIDNWLLRHGSCPMCR.

This sequence belongs to the RING-type zinc finger family. NIP subfamily. As to quaternary structure, interacts with RPOT2.

The protein localises to the plastid. The protein resides in the chloroplast thylakoid membrane. Functionally, intrinsic thylakoid membrane protein that fixes RPOT2 on the stromal side of the thylakoid membrane. In Arabidopsis thaliana (Mouse-ear cress), this protein is NEP1-interacting protein 2 (NIP2).